The sequence spans 2517 residues: Protein capicua homolog (2517 aa).

Disordered regions lie at residues 1-197 (MKPM…SGSY), 300-325 (LSPGPSSQPGLPGSLPQPPQPLHREP), 342-483 (PWEP…KYKK), 531-579 (EMEG…RGDS), 608-640 (SSRSGTPSFSPVSTQSPFSPAPSPSPSPLFGFR), and 658-767 (VRSR…FRAV). Over residues 57–67 (EEAEEGEEEEA) the composition is skewed to acidic residues. Residues 91–101 (EDPKGDGEAGR) show a composition bias toward basic and acidic residues. Low complexity-rich tracts occupy residues 158 to 167 (TSTRSSSTDT) and 300 to 313 (LSPGPSSQPGLPGS). The segment covering 396–405 (HCEEGEEKHP) has biased composition (basic and acidic residues). The span at 414–428 (LPLPPPQLLSPPPKS) shows a compositional bias: pro residues. A compositionally biased stretch (low complexity) spans 451 to 477 (GSRSSSVASLEKGTAPAARARTPLTAA). Positions 608-619 (SSRSGTPSFSPV) are enriched in polar residues. Residues 677 to 686 (DLGPHPPPPA) show a composition bias toward pro residues. Polar residues predominate over residues 698–707 (TFQTNLTFTV). Residues 726–735 (GAPGAGGGGA) show a composition bias toward gly residues. A phosphoserine mark is found at Ser776 and Ser780. Disordered stretches follow at residues 812 to 842 (IVRNPDVPLPSKFPGEVGTAGEVRAGGPGRG), 955 to 1110 (PSQP…DHIR), 1179 to 1220 (CNKD…APGV), 1235 to 1274 (SDTKAPGSSSCGAERLHTVGGPGSARPRAFSHSGVHSLDG), 1290 to 1347 (SGPA…TSDE), 1379 to 1539 (RVTD…ILQT), and 1595 to 1628 (IASKPFPTSGRAEASPNDTAGARTEMGTGSRVPG). The interaction with ATXN1 stretch occupies residues 937-955 (EPRSVAVFPWHSLVPFLAP). A compositionally biased stretch (polar residues) spans 959–981 (DPSVQPSEAQQPASHPVASNQSK). Ser1055 and Ser1082 each carry phosphoserine. Basic and acidic residues-rich tracts occupy residues 1087-1110 (PKERDSSSEKDGRSPNKREKDHIR), 1179-1188 (CNKDRKKSSS), and 1200-1209 (GHKETRERSM). Residue Arg1099 is modified to Omega-N-methylarginine. The HMG box DNA-binding region spans 1109–1177 (IRRPMNAFMI…AHFKAHPDWK (69 aa)). Ser1186 bears the Phosphoserine mark. A compositionally biased stretch (polar residues) spans 1235-1245 (SDTKAPGSSSC). Ser1271 carries the post-translational modification Phosphoserine. Residues 1305–1323 (GAPGPFAAPGEGGALAATG) show a composition bias toward low complexity. Phosphoserine is present on residues Ser1340, Ser1345, and Ser1405. Positions 1418 to 1430 (PLDPEPPGPPDPP) are enriched in pro residues. Low complexity predominate over residues 1439-1456 (SAPSSSASSPASSSASAA). Residues 1457 to 1474 (TSFSLGSGTFKAQESGQG) show a composition bias toward polar residues. 3 positions are modified to phosphoserine: Ser1609, Ser1630, and Ser1648. Arg1772 carries the asymmetric dimethylarginine modification. Positions 1799–1818 (QSVPSAPPPKAQSVSPVQAP) are disordered. An Omega-N-methylarginine modification is found at Arg1843. Disordered stretches follow at residues 2039-2064 (AATILPKGPPAPATATPAPTSPFPSA), 2100-2342 (SFEA…AKCE), and 2430-2517 (AATP…ATGR). The segment covering 2051-2064 (ATATPAPTSPFPSA) has biased composition (low complexity). Composition is skewed to pro residues over residues 2110-2119 (GPAPRQPLEP) and 2136-2145 (PTPPAPPPLP). The segment covering 2146–2155 (ETWTPTARSS) has biased composition (low complexity). Lys2177 is modified (N6-acetyllysine). A compositionally biased stretch (pro residues) spans 2198–2209 (PPTPPSPAPAPA). Position 2200 is a phosphothreonine (Thr2200). Phosphoserine is present on Ser2203. The span at 2210–2225 (VAPGGSSESSSGRAAG) shows a compositional bias: low complexity. Residues 2249–2278 (KTFDSVDNRVLSEVDFEERFAELPEFRPEE) are compositionally biased toward basic and acidic residues. Phosphoserine occurs at positions 2260, 2282, 2287, 2291, 2298, and 2306. Thr2307 bears the Phosphothreonine mark. Phosphoserine occurs at positions 2311 and 2318. Residues 2457 to 2469 (APTPSPAGGPDPT) show a composition bias toward pro residues. Ser2504 bears the Phosphoserine mark.

Found in a complex with ATXN1 and ATXN1L. As to quaternary structure, interacts with ATXN1. As to expression, expressed in fetal brain.

The protein localises to the nucleus. Functionally, transcriptional repressor which plays a role in development of the central nervous system (CNS). In concert with ATXN1 and ATXN1L, involved in brain development. In Homo sapiens (Human), this protein is Protein capicua homolog (CIC).